The chain runs to 267 residues: Hydroxyethylthiazole kinase 2 (267 aa).

Residue M41 participates in substrate binding. ATP is bound by residues K116 and T166. G193 is a binding site for substrate.

Belongs to the Thz kinase family. The cofactor is Mg(2+).

The enzyme catalyses 5-(2-hydroxyethyl)-4-methylthiazole + ATP = 4-methyl-5-(2-phosphooxyethyl)-thiazole + ADP + H(+). Its pathway is cofactor biosynthesis; thiamine diphosphate biosynthesis; 4-methyl-5-(2-phosphoethyl)-thiazole from 5-(2-hydroxyethyl)-4-methylthiazole: step 1/1. In terms of biological role, catalyzes the phosphorylation of the hydroxyl group of 4-methyl-5-beta-hydroxyethylthiazole (THZ). The chain is Hydroxyethylthiazole kinase 2 from Streptococcus pneumoniae (strain P1031).